Here is a 202-residue protein sequence, read N- to C-terminus: Recombination protein RecR (202 aa).

A C4-type zinc finger spans residues 61–76 (CARCNSFTEDEVCATC). A Toprim domain is found at 84-179 (GLLCIVETPA…KVTRLARGVP (96 aa)).

This sequence belongs to the RecR family.

In terms of biological role, may play a role in DNA repair. It seems to be involved in an RecBC-independent recombinational process of DNA repair. It may act with RecF and RecO. The chain is Recombination protein RecR from Bordetella bronchiseptica (strain ATCC BAA-588 / NCTC 13252 / RB50) (Alcaligenes bronchisepticus).